Reading from the N-terminus, the 164-residue chain is I-Kappa-B like protein F1 (164 aa).

ANK repeat units lie at residues 57 to 89 (HGRQ…NINA), 94 to 124 (TGNT…DLGA), and 128 to 157 (QQET…AYNN).

The protein belongs to the polydnaviridae I-Kappa-B-like protein family.

Suppresses the host immune response through NF-kappa-B inactivation. Possesses ankyrin repeat domains required for NF-kappa-B binding but lacks the regulatory regions required for dissociation from NF-kappa-B and degradation. Therefore, prevents host NF-kappa-B release and subsequent activation. This chain is I-Kappa-B like protein F1 (F2), found in Microplitis demolitor bracovirus (isolate Webb) (MdBV).